The primary structure comprises 92 residues: Small ribosomal subunit protein uS19 (92 aa).

The protein belongs to the universal ribosomal protein uS19 family.

Functionally, protein S19 forms a complex with S13 that binds strongly to the 16S ribosomal RNA. In Jannaschia sp. (strain CCS1), this protein is Small ribosomal subunit protein uS19.